We begin with the raw amino-acid sequence, 397 residues long: Acetate kinase 1 (397 aa).

Asparagine 8 is a binding site for Mg(2+). Lysine 15 serves as a coordination point for ATP. Arginine 89 is a binding site for substrate. Aspartate 146 acts as the Proton donor/acceptor in catalysis. ATP contacts are provided by residues 206-210, 281-283, and 329-333; these read HLGNG, DLR, and GIGEN. A Mg(2+)-binding site is contributed by glutamate 382.

This sequence belongs to the acetokinase family. In terms of assembly, homodimer. Requires Mg(2+) as cofactor. Mn(2+) is required as a cofactor.

It localises to the cytoplasm. The catalysed reaction is acetate + ATP = acetyl phosphate + ADP. The protein operates within metabolic intermediate biosynthesis; acetyl-CoA biosynthesis; acetyl-CoA from acetate: step 1/2. In terms of biological role, catalyzes the formation of acetyl phosphate from acetate and ATP. Can also catalyze the reverse reaction. The polypeptide is Acetate kinase 1 (Listeria monocytogenes serovar 1/2a (strain ATCC BAA-679 / EGD-e)).